A 585-amino-acid chain; its full sequence is ATP-dependent lipid A-core flippase (585 aa).

A run of 6 helical transmembrane segments spans residues 25-45, 63-83, 127-146, 150-170, 250-270, and 277-297; these read FLAA…FPAI, WLFY…FGFL, IAYD…TSLI, LSIV…TLIT, QSPL…GVAL, and QTTV…MAPL. Residues 26–309 enclose the ABC transmembrane type-1 domain; sequence LAALACMGVA…VTDVNAPIQR (284 aa). The ABC transporter domain maps to 341–577; sequence VEFDGVTFTY…DGLYARLYRM (237 aa). 375-382 serves as a coordination point for ATP; that stretch reads GPSGSGKT.

The protein belongs to the ABC transporter superfamily. Lipid exporter (TC 3.A.1.106) family. Homodimer.

Its subcellular location is the cell inner membrane. It carries out the reaction ATP + H2O + lipid A-core oligosaccharideSide 1 = ADP + phosphate + lipid A-core oligosaccharideSide 2.. Its function is as follows. Involved in lipopolysaccharide (LPS) biosynthesis. Translocates lipid A-core from the inner to the outer leaflet of the inner membrane. Transmembrane domains (TMD) form a pore in the inner membrane and the ATP-binding domain (NBD) is responsible for energy generation. The protein is ATP-dependent lipid A-core flippase of Dechloromonas aromatica (strain RCB).